Reading from the N-terminus, the 142-residue chain is Large ribosomal subunit protein bL17 (142 aa).

This sequence belongs to the bacterial ribosomal protein bL17 family. Part of the 50S ribosomal subunit. Contacts protein L32.

The protein is Large ribosomal subunit protein bL17 of Chlamydia muridarum (strain MoPn / Nigg).